A 318-amino-acid chain; its full sequence is NADH-ubiquinone oxidoreductase chain 1 (318 aa).

The next 8 helical transmembrane spans lie at 5–25, 69–89, 102–122, 148–168, 174–194, 215–235, 253–273, and 293–313; these read IISS…LTLI, SIFL…ILWI, LGLM…LTSG, LGLM…KLFI, IWLL…TLAE, VEFS…NILF, LYFS…FLWV, and FLPI…FFGV.

This sequence belongs to the complex I subunit 1 family.

It localises to the mitochondrion inner membrane. The catalysed reaction is a ubiquinone + NADH + 5 H(+)(in) = a ubiquinol + NAD(+) + 4 H(+)(out). In terms of biological role, core subunit of the mitochondrial membrane respiratory chain NADH dehydrogenase (Complex I) that is believed to belong to the minimal assembly required for catalysis. Complex I functions in the transfer of electrons from NADH to the respiratory chain. The immediate electron acceptor for the enzyme is believed to be ubiquinone. In Myxine glutinosa (Atlantic hagfish), this protein is NADH-ubiquinone oxidoreductase chain 1 (MT-ND1).